Here is a 541-residue protein sequence, read N- to C-terminus: Cytochrome bc1 complex cytochrome b subunit (541 aa).

Residues F36–L56 traverse the membrane as a helical segment. Heme contacts are provided by H105 and H119. A run of 3 helical transmembrane segments spans residues A109 to F129, W137 to L157, and I169 to F189. Residues H206 and H221 each contribute to the heme site. 5 helical membrane passes run V207 to Y227, S256 to I276, V325 to I345, L371 to W391, and I408 to L428.

It belongs to the cytochrome b family. The cytochrome bc1 complex is composed of a cytochrome b (QcrB), the Rieske protein iron-sulfur (QcrA) and a diheme cytochrome c (QcrC) subunit. Heme serves as cofactor.

The protein resides in the cell membrane. The enzyme catalyses a quinol + 2 Fe(III)-[cytochrome c](out) = a quinone + 2 Fe(II)-[cytochrome c](out) + 2 H(+)(out). In terms of biological role, cytochrome b subunit of the cytochrome bc1 complex, an essential component of the respiratory electron transport chain required for ATP synthesis. The bc1 complex catalyzes the oxidation of menaquinol and the reduction of cytochrome c in the respiratory chain. The bc1 complex operates through a Q-cycle mechanism that couples electron transfer to generation of the proton gradient that drives ATP synthesis. The protein is Cytochrome bc1 complex cytochrome b subunit (qcrB) of Corynebacterium efficiens (strain DSM 44549 / YS-314 / AJ 12310 / JCM 11189 / NBRC 100395).